A 176-amino-acid chain; its full sequence is 3-hydroxydecanoyl-[acyl-carrier-protein] dehydratase (176 aa).

The active site involves H71.

It belongs to the thioester dehydratase family. FabA subfamily. As to quaternary structure, homodimer.

Its subcellular location is the cytoplasm. The enzyme catalyses a (3R)-hydroxyacyl-[ACP] = a (2E)-enoyl-[ACP] + H2O. It catalyses the reaction (3R)-hydroxydecanoyl-[ACP] = (2E)-decenoyl-[ACP] + H2O. It carries out the reaction (2E)-decenoyl-[ACP] = (3Z)-decenoyl-[ACP]. It functions in the pathway lipid metabolism; fatty acid biosynthesis. Its function is as follows. Necessary for the introduction of cis unsaturation into fatty acids. Catalyzes the dehydration of (3R)-3-hydroxydecanoyl-ACP to E-(2)-decenoyl-ACP and then its isomerization to Z-(3)-decenoyl-ACP. Can catalyze the dehydratase reaction for beta-hydroxyacyl-ACPs with saturated chain lengths up to 16:0, being most active on intermediate chain length. This Afipia carboxidovorans (strain ATCC 49405 / DSM 1227 / KCTC 32145 / OM5) (Oligotropha carboxidovorans) protein is 3-hydroxydecanoyl-[acyl-carrier-protein] dehydratase.